The primary structure comprises 397 residues: MSYKRVFVIVMDSVGTGAAHDAAKFDDVGSDTLGHVGEYYKGALKLPNLGKLGISNLRDTPIEGVPVADPAIGDYGKMEEISAGKDSMDGHWEMMGLPVMKPLSTFPNGFPQEIVDKLEKFSGRKVIVNKPYSGTEVIHDYGERQMETGELILYTSGDSVMQIAAHEDVIPVEELYKICEYARTLVNGPEYTVGRIIARPYVGPDKDHFTRTANRHDFSLKPIGETDMDRLRAAGYDVIGVGKINDIFSGEGIDKGYHNESNMDGMDHVDEVMKQDFTGFCFTNLVDFDAMYGHRRNPKGFGQALMDFDKRLGNVLDEMKPDDLLMITADHGNDPGFKGTDHTRENVPLLVYSPSMNKPNQSLGVRKTFSDLGATILENFNVEPVKGTSFYKEISND.

Mn(2+) contacts are provided by Asp-12, Asp-289, His-294, Asp-330, His-331, and His-342.

This sequence belongs to the phosphopentomutase family. Mn(2+) serves as cofactor.

The protein resides in the cytoplasm. The enzyme catalyses 2-deoxy-alpha-D-ribose 1-phosphate = 2-deoxy-D-ribose 5-phosphate. It catalyses the reaction alpha-D-ribose 1-phosphate = D-ribose 5-phosphate. It functions in the pathway carbohydrate degradation; 2-deoxy-D-ribose 1-phosphate degradation; D-glyceraldehyde 3-phosphate and acetaldehyde from 2-deoxy-alpha-D-ribose 1-phosphate: step 1/2. Functionally, isomerase that catalyzes the conversion of deoxy-ribose 1-phosphate (dRib-1-P) and ribose 1-phosphate (Rib-1-P) to deoxy-ribose 5-phosphate (dRib-5-P) and ribose 5-phosphate (Rib-5-P), respectively. In Limosilactobacillus reuteri (strain DSM 20016) (Lactobacillus reuteri), this protein is Phosphopentomutase.